The primary structure comprises 137 residues: Large ribosomal subunit protein uL16 (137 aa).

Belongs to the universal ribosomal protein uL16 family. In terms of assembly, part of the 50S ribosomal subunit.

Functionally, binds 23S rRNA and is also seen to make contacts with the A and possibly P site tRNAs. This chain is Large ribosomal subunit protein uL16, found in Pseudomonas entomophila (strain L48).